The chain runs to 215 residues: Cytochrome b6 (215 aa).

A helical transmembrane segment spans residues 32-52; it reads IFYCFGGIVFTCFLVQVATGF. Cysteine 35 lines the heme c pocket. Heme b contacts are provided by histidine 86 and histidine 100. Transmembrane regions (helical) follow at residues 90-110, 116-136, and 186-206; these read ASMM…TGGF, LTWV…VTGY, and AHTF…FLMI. Histidine 187 and histidine 202 together coordinate heme b.

It belongs to the cytochrome b family. PetB subfamily. The 4 large subunits of the cytochrome b6-f complex are cytochrome b6, subunit IV (17 kDa polypeptide, PetD), cytochrome f and the Rieske protein, while the 4 small subunits are PetG, PetL, PetM and PetN. The complex functions as a dimer. Requires heme b as cofactor. Heme c is required as a cofactor.

The protein localises to the plastid. Its subcellular location is the chloroplast thylakoid membrane. Its function is as follows. Component of the cytochrome b6-f complex, which mediates electron transfer between photosystem II (PSII) and photosystem I (PSI), cyclic electron flow around PSI, and state transitions. The sequence is that of Cytochrome b6 from Skeletonema costatum (Marine centric diatom).